Consider the following 184-residue polypeptide: Protein DP71L (184 aa).

Basic residues predominate over residues 1–15 (MSRRNKRSRRRRKKP). The tract at residues 1–41 (MSRRNKRSRRRRKKPLNTIQPGPSKPSAQDEPIKSVSHHSS) is disordered. 2 important for host CHOP inhibition regions span residues 125 to 127 (VYF) and 169 to 173 (LSAVL).

This sequence belongs to the asfivirus DP71L family. As to quaternary structure, interacts (via C-terminus) with host PPP1CB.

In terms of biological role, interacts with the host phosphatase PP1 catalytic subunit (PPP1CB) and recruits it to dephosphorylate EIF2S1/eIF2alpha and therefore restores the host translation that has been shut-down by the host. Also inhibits the EIF2S1/eIF2alpha-ATF4-DDIT3/CHOP pathway. This Ornithodoros (relapsing fever ticks) protein is Protein DP71L.